The following is a 363-amino-acid chain: TBC1 domain family member whacked (363 aa).

One can recognise a Rab-GAP TBC domain in the interval 77–265 (GIPKSVRPKA…RVWDCFLAEG (189 aa)). The tract at residues 335–363 (KARRAKQKAQQEAESSGSGNGHRRNMPTL) is disordered.

The protein resides in the apical cell membrane. It localises to the cytoplasmic vesicle. It is found in the cell projection. The protein localises to the filopodium. Its function is as follows. Essential for ensuring the polarized growth of tracheal seamless tubes. During seamless tube morphogenesis, likely to act as a GTPase-activating protein (GAP) for Rab35 to regulate vesicle trafficking from the recycling endosomes to the lumenal apical membrane to ensure the polarized dynein motor complex-dependent growth of seamless tubes along the proximodistal axis in tracheal terminal cells. When the terminal branch lumen is growing, Rab35-GTP is active and likely directs the transport of apical membrane vesicles from the soma to the distal tip of elongating terminal cell branches thus providing a continuous supply of apical membrane components as the lumen grows. Whereas when Rab35-GDP is inactivated, presumably by this GAP, apical membrane vesicles are transported to a central location adjacent to the terminal cell nucleus. The polypeptide is TBC1 domain family member whacked (Drosophila melanogaster (Fruit fly)).